We begin with the raw amino-acid sequence, 594 residues long: Aspartate--tRNA(Asp/Asn) ligase (594 aa).

Glutamate 173 contributes to the L-aspartate binding site. An aspartate region spans residues 197 to 200; sequence QLFK. L-aspartate is bound at residue arginine 219. ATP is bound by residues 219–221 and glutamine 228; that span reads RDE. Histidine 451 contributes to the L-aspartate binding site. ATP is bound at residue glutamate 485. Residue arginine 492 coordinates L-aspartate. Residue 537–540 coordinates ATP; that stretch reads GWDR. Residues 566 to 594 are disordered; it reads PLTDAPAPITAQQRKESGIDAQPKRVQQA.

It belongs to the class-II aminoacyl-tRNA synthetase family. Type 1 subfamily. In terms of assembly, homodimer.

It localises to the cytoplasm. It catalyses the reaction tRNA(Asx) + L-aspartate + ATP = L-aspartyl-tRNA(Asx) + AMP + diphosphate. Its function is as follows. Aspartyl-tRNA synthetase with relaxed tRNA specificity since it is able to aspartylate not only its cognate tRNA(Asp) but also tRNA(Asn). Reaction proceeds in two steps: L-aspartate is first activated by ATP to form Asp-AMP and then transferred to the acceptor end of tRNA(Asp/Asn). This is Aspartate--tRNA(Asp/Asn) ligase from Mycobacterium tuberculosis (strain CDC 1551 / Oshkosh).